The following is a 227-amino-acid chain: Cytochrome c oxidase subunit 2 (227 aa).

The Mitochondrial intermembrane segment spans residues 1 to 26; sequence MATWSNLNLQNSSSPLMEQLIFFHDH. Residues 27–48 form a helical membrane-spanning segment; that stretch reads TLMILLMITVLVAYIMSMLFFN. Residues 49–62 are Mitochondrial matrix-facing; it reads LYTNRFLLEGQTIE. A helical transmembrane segment spans residues 63-82; that stretch reads IIWTILPAITLIFIALPSLR. Residues 83 to 227 lie on the Mitochondrial intermembrane side of the membrane; sequence LLYLLDESMD…FINWIKNYSS (145 aa). Cu cation is bound by residues His-160, Cys-195, Glu-197, Cys-199, His-203, and Met-206. Glu-197 provides a ligand contact to Mg(2+).

This sequence belongs to the cytochrome c oxidase subunit 2 family. Component of the cytochrome c oxidase (complex IV, CIV), a multisubunit enzyme composed of a catalytic core of 3 subunits and several supernumerary subunits. The complex exists as a monomer or a dimer and forms supercomplexes (SCs) in the inner mitochondrial membrane with ubiquinol-cytochrome c oxidoreductase (cytochrome b-c1 complex, complex III, CIII). Requires Cu cation as cofactor.

The protein resides in the mitochondrion inner membrane. The catalysed reaction is 4 Fe(II)-[cytochrome c] + O2 + 8 H(+)(in) = 4 Fe(III)-[cytochrome c] + 2 H2O + 4 H(+)(out). Functionally, component of the cytochrome c oxidase, the last enzyme in the mitochondrial electron transport chain which drives oxidative phosphorylation. The respiratory chain contains 3 multisubunit complexes succinate dehydrogenase (complex II, CII), ubiquinol-cytochrome c oxidoreductase (cytochrome b-c1 complex, complex III, CIII) and cytochrome c oxidase (complex IV, CIV), that cooperate to transfer electrons derived from NADH and succinate to molecular oxygen, creating an electrochemical gradient over the inner membrane that drives transmembrane transport and the ATP synthase. Cytochrome c oxidase is the component of the respiratory chain that catalyzes the reduction of oxygen to water. Electrons originating from reduced cytochrome c in the intermembrane space (IMS) are transferred via the dinuclear copper A center (CU(A)) of subunit 2 and heme A of subunit 1 to the active site in subunit 1, a binuclear center (BNC) formed by heme A3 and copper B (CU(B)). The BNC reduces molecular oxygen to 2 water molecules using 4 electrons from cytochrome c in the IMS and 4 protons from the mitochondrial matrix. This Acheta domesticus (House cricket) protein is Cytochrome c oxidase subunit 2 (COII).